We begin with the raw amino-acid sequence, 238 residues long: Protein odd-skipped-related 2 (238 aa).

Positions 105–126 (EDPPVTGQSRLSPERRPARGRL) are disordered. 3 C2H2-type zinc fingers span residues 134 to 156 (FICR…ERTH), 162 to 184 (YTCD…RYIH), and 190 to 212 (FKCQ…KTLH).

It belongs to the Odd C2H2-type zinc-finger protein family. At the 8-somite stage, expressed in the pronephros, with weak generalized expression elsewhere. At 24 hpf, expressed in the kidney tubules and the anterior duct, and also in the gut. At 60 hpf, expressed in the tubules and the pectoral fin buds.

The protein localises to the nucleus. Transcriptional repressor. Required for pronephric kidney development. In Danio rerio (Zebrafish), this protein is Protein odd-skipped-related 2.